Consider the following 288-residue polypeptide: 4-diphosphocytidyl-2-C-methyl-D-erythritol kinase (288 aa).

Residue lysine 8 is part of the active site. 90–100 (PLEAGLAGGSA) contributes to the ATP binding site. Aspartate 132 is a catalytic residue.

The protein belongs to the GHMP kinase family. IspE subfamily.

It carries out the reaction 4-CDP-2-C-methyl-D-erythritol + ATP = 4-CDP-2-C-methyl-D-erythritol 2-phosphate + ADP + H(+). It participates in isoprenoid biosynthesis; isopentenyl diphosphate biosynthesis via DXP pathway; isopentenyl diphosphate from 1-deoxy-D-xylulose 5-phosphate: step 3/6. Functionally, catalyzes the phosphorylation of the position 2 hydroxy group of 4-diphosphocytidyl-2C-methyl-D-erythritol. The polypeptide is 4-diphosphocytidyl-2-C-methyl-D-erythritol kinase (Carboxydothermus hydrogenoformans (strain ATCC BAA-161 / DSM 6008 / Z-2901)).